We begin with the raw amino-acid sequence, 528 residues long: Extracellular serine/threonine protein CG31145 (528 aa).

At 1–12 the chain is on the cytoplasmic side; that stretch reads MAVLRTMKLKER. Residues 1–76 constitute a propeptide that is removed on maturation; sequence MAVLRTMKLK…LHEFKRKFLQ (76 aa). The helical transmembrane segment at 13-33 threads the bilayer; that stretch reads LVISLGATLVLLTLLLIVDVQ. The Lumenal portion of the chain corresponds to 34–528; it reads MDFGVANRHL…VDGSETDVSS (495 aa). The segment at 77-130 is disordered; that stretch reads KSNASGSKEASTQAGASQSGGATSGQDAAAGASGGAAGPGTSRSTSTRKPTPHD. The N-linked (GlcNAc...) asparagine glycan is linked to N79. The segment covering 86–107 has biased composition (low complexity); it reads ASTQAGASQSGGATSGQDAAAG. N173 carries an N-linked (GlcNAc...) asparagine glycan. Residues Q220, K236, and E257 each coordinate ATP. Residue E257 participates in Mn(2+) binding. N286 carries N-linked (GlcNAc...) asparagine glycosylation. 2 disulfide bridges follow: C312-C328 and C317-C321. 339–342 contributes to the ATP binding site; the sequence is AAFL. 2 disulfides stabilise this stretch: C376-C450 and C451-C510. Residue D408 is part of the active site. Residue E413 participates in ATP binding. The N-linked (GlcNAc...) asparagine glycan is linked to N420. Residue D428 coordinates ATP. Residue D428 coordinates Mn(2+).

This sequence belongs to the FAM20 family. The cofactor is Mn(2+). As to expression, in embryos, prominently expressed in midline glia, salivary gland, intestine and dorsal vessel (heart). Not associated with biomineralization.

It is found in the golgi apparatus membrane. The protein localises to the secreted. The catalysed reaction is L-seryl-[protein] + ATP = O-phospho-L-seryl-[protein] + ADP + H(+). The enzyme catalyses L-threonyl-[protein] + ATP = O-phospho-L-threonyl-[protein] + ADP + H(+). Golgi serine/threonine protein kinase that phosphorylates secretory pathway proteins within Ser-x-Glu/pSer motifs. This chain is Extracellular serine/threonine protein CG31145, found in Drosophila melanogaster (Fruit fly).